Consider the following 37-residue polypeptide: Large ribosomal subunit protein bL36 (37 aa).

This sequence belongs to the bacterial ribosomal protein bL36 family.

The sequence is that of Large ribosomal subunit protein bL36 from Bacillus anthracis (strain A0248).